Consider the following 195-residue polypeptide: MNYLIFKVIYANANIVVGEHNFIGYQIRIPKDYELEINKFCKLYLYEYISIMPNKNLIIKDLYGFRTYNERLLFIDLISINSIGPKTAINILKYDIDTIIDAIATKNIDYLITIKGINQRNANLICDQLNYKYINKVNDKNNWAKELSIGLENLGYTKKDIEYAITKVKINSQQDIDISEIISSAIKEISLRHEN.

A domain I region spans residues 1–66; that stretch reads MNYLIFKVIY…LIIKDLYGFR (66 aa). Residues 67–141 are domain II; sequence TYNERLLFID…KYINKVNDKN (75 aa). N141 is a region of interest (flexible linker). Residues 141 to 195 are domain III; it reads NNWAKELSIGLENLGYTKKDIEYAITKVKINSQQDIDISEIISSAIKEISLRHEN.

The protein belongs to the RuvA family. Homotetramer. Forms an RuvA(8)-RuvB(12)-Holliday junction (HJ) complex. HJ DNA is sandwiched between 2 RuvA tetramers; dsDNA enters through RuvA and exits via RuvB. An RuvB hexamer assembles on each DNA strand where it exits the tetramer. Each RuvB hexamer is contacted by two RuvA subunits (via domain III) on 2 adjacent RuvB subunits; this complex drives branch migration. In the full resolvosome a probable DNA-RuvA(4)-RuvB(12)-RuvC(2) complex forms which resolves the HJ.

Its subcellular location is the cytoplasm. In terms of biological role, the RuvA-RuvB-RuvC complex processes Holliday junction (HJ) DNA during genetic recombination and DNA repair, while the RuvA-RuvB complex plays an important role in the rescue of blocked DNA replication forks via replication fork reversal (RFR). RuvA specifically binds to HJ cruciform DNA, conferring on it an open structure. The RuvB hexamer acts as an ATP-dependent pump, pulling dsDNA into and through the RuvAB complex. HJ branch migration allows RuvC to scan DNA until it finds its consensus sequence, where it cleaves and resolves the cruciform DNA. The protein is Holliday junction branch migration complex subunit RuvA of Ureaplasma parvum serovar 3 (strain ATCC 27815 / 27 / NCTC 11736).